Here is an 856-residue protein sequence, read N- to C-terminus: DNA mismatch repair protein MutS (856 aa).

618-625 (GPNMGGKS) provides a ligand contact to ATP.

This sequence belongs to the DNA mismatch repair MutS family.

In terms of biological role, this protein is involved in the repair of mismatches in DNA. It is possible that it carries out the mismatch recognition step. This protein has a weak ATPase activity. This is DNA mismatch repair protein MutS from Shewanella baltica (strain OS155 / ATCC BAA-1091).